An 802-amino-acid chain; its full sequence is Phenylalanine--tRNA ligase beta subunit (802 aa).

One can recognise a tRNA-binding domain in the interval arginine 40–arginine 149. Positions histidine 407–valine 484 constitute a B5 domain. Aspartate 462, aspartate 468, glutamate 471, and glutamate 472 together coordinate Mg(2+). The region spanning serine 710 to arginine 802 is the FDX-ACB domain.

The protein belongs to the phenylalanyl-tRNA synthetase beta subunit family. Type 1 subfamily. In terms of assembly, tetramer of two alpha and two beta subunits. Requires Mg(2+) as cofactor.

The protein resides in the cytoplasm. The enzyme catalyses tRNA(Phe) + L-phenylalanine + ATP = L-phenylalanyl-tRNA(Phe) + AMP + diphosphate + H(+). This is Phenylalanine--tRNA ligase beta subunit from Leptospira borgpetersenii serovar Hardjo-bovis (strain L550).